The chain runs to 266 residues: Undecaprenyl-diphosphatase (266 aa).

A run of 8 helical transmembrane segments spans residues 1-21, 39-59, 87-107, 111-131, 144-164, 183-203, 218-238, and 244-264; these read METF…FLPI, QGLS…VIYF, WWII…KDFI, FRNT…LWAA, MGWK…IPGT, AAAR…ALLV, ALGL…HFFL, and IGMT…LGLL.

It belongs to the UppP family.

The protein localises to the cell inner membrane. The catalysed reaction is di-trans,octa-cis-undecaprenyl diphosphate + H2O = di-trans,octa-cis-undecaprenyl phosphate + phosphate + H(+). Its function is as follows. Catalyzes the dephosphorylation of undecaprenyl diphosphate (UPP). Confers resistance to bacitracin. This Shewanella frigidimarina (strain NCIMB 400) protein is Undecaprenyl-diphosphatase.